The following is a 104-amino-acid chain: MIRKAFVMQVNPDAHEEYQHRHNPIWPELEVVLKSHGAHNYAIYLDKARNLLFATVEIESEERWNAVASTDVCQRWWKYMTDVMPANPNNSPVSSELQEVFYLP.

Tyrosine 18 contacts substrate. Catalysis depends on histidine 22, which acts as the Proton donor. Residues tyrosine 41 and 76 to 77 (WW) contribute to the substrate site.

The protein belongs to the rhamnose mutarotase family. Homodimer.

Its subcellular location is the cytoplasm. It catalyses the reaction alpha-L-rhamnose = beta-L-rhamnose. It participates in carbohydrate metabolism; L-rhamnose metabolism. Involved in the anomeric conversion of L-rhamnose. The protein is L-rhamnose mutarotase of Escherichia fergusonii (strain ATCC 35469 / DSM 13698 / CCUG 18766 / IAM 14443 / JCM 21226 / LMG 7866 / NBRC 102419 / NCTC 12128 / CDC 0568-73).